The chain runs to 340 residues: MGRKKIQITRIQDERNRQVTFTKRKFGLMKKAYELSVLCDCEIALIVFNSTNKLFQYASTDMDKVLLKYTEYNEPHESRTNNDIMEALNRKEGNQGGGNSDDESPGPSTSPVIQITMPAVVNGHSSNNSVASAASASAAAVAAAAAAVAAVEGTSSGAAAAAAALQASNAQRHHNLNLYQNLIFNPNYTRHLNQRNDPLSSTSVAPSSSSSKHLDFPPSTSFAYDTSRLHPIAAADADCDLVPSSRAAADQNIWSSALQQRPVSQPAPSISNSSTNGISNGTSSLLSPNVSSLNGHSVLDLGGPNLPYKLDPNTYVKMEPHSPPEKRPRITTEWRPQQLT.

An MADS-box domain is found at 1–61 (MGRKKIQITR…NKLFQYASTD (61 aa)). Disordered regions lie at residues 90-112 (RKEG…TSPV), 193-217 (NQRN…LDFP), 258-283 (LQQR…NGTS), and 312-340 (PNTY…QQLT). Low complexity predominate over residues 200–211 (SSTSVAPSSSSS). Polar residues predominate over residues 258 to 268 (LQQRPVSQPAP). Residues 269–283 (SISNSSTNGISNGTS) are compositionally biased toward low complexity. Residues 318 to 332 (MEPHSPPEKRPRITT) show a composition bias toward basic and acidic residues.

It belongs to the MEF2 family. Interacts with histone deacetylase hda-4 isoform b.

It localises to the nucleus. In terms of biological role, transcription regulator. Binds specifically to the MEF2 element, 5'-[TC]TA[AT][AT][AT][AT]TA[AG]-3' in the regulatory elements of target genes, such as chemoreceptors str-1 and srh-234. Involved in transduction of sensory signals, together with egl-4, kin-29 and hda-4; binding to histone deacetylase hda-4 enables negative modulation of chemoreceptor gene expression in chemosensory neurons. In response to starvation, negatively modulates expression of chemoreceptor srh-234 in ADL sensory neurons, acting in concert with basic helix-loop-helix (bHLH) transcription factors. Plays a role in regulating muscle sensitivity to acetylcholine (ACh) and the magnitude of presynaptic ACh release via a retrograde signal, perhaps by indirectly decreasing Ras-related protein Rab-3 activity. This chain is MEF2 transcription factor homolog, found in Caenorhabditis elegans.